A 270-amino-acid chain; its full sequence is Bis(5'-nucleosyl)-tetraphosphatase, symmetrical (270 aa).

This sequence belongs to the Ap4A hydrolase family.

It carries out the reaction P(1),P(4)-bis(5'-adenosyl) tetraphosphate + H2O = 2 ADP + 2 H(+). In terms of biological role, hydrolyzes diadenosine 5',5'''-P1,P4-tetraphosphate to yield ADP. The protein is Bis(5'-nucleosyl)-tetraphosphatase, symmetrical of Thioalkalivibrio sulfidiphilus (strain HL-EbGR7).